The primary structure comprises 185 residues: Ribosome-recycling factor (185 aa).

This sequence belongs to the RRF family.

It is found in the cytoplasm. Its function is as follows. Responsible for the release of ribosomes from messenger RNA at the termination of protein biosynthesis. May increase the efficiency of translation by recycling ribosomes from one round of translation to another. The chain is Ribosome-recycling factor from Pseudothermotoga lettingae (strain ATCC BAA-301 / DSM 14385 / NBRC 107922 / TMO) (Thermotoga lettingae).